A 468-amino-acid polypeptide reads, in one-letter code: Bifunctional protein HldE (468 aa).

Residues 1 to 315 (MAKKVEILVV…ELLRSRANAE (315 aa)) form a ribokinase region. 192–195 (NRKE) is an ATP binding site. D260 is an active-site residue. A cytidylyltransferase region spans residues 340–468 (FTNGCFDILH…IVKRIKDADK (129 aa)).

It in the N-terminal section; belongs to the carbohydrate kinase PfkB family. The protein in the C-terminal section; belongs to the cytidylyltransferase family. As to quaternary structure, homodimer.

The catalysed reaction is D-glycero-beta-D-manno-heptose 7-phosphate + ATP = D-glycero-beta-D-manno-heptose 1,7-bisphosphate + ADP + H(+). It catalyses the reaction D-glycero-beta-D-manno-heptose 1-phosphate + ATP + H(+) = ADP-D-glycero-beta-D-manno-heptose + diphosphate. It functions in the pathway nucleotide-sugar biosynthesis; ADP-L-glycero-beta-D-manno-heptose biosynthesis; ADP-L-glycero-beta-D-manno-heptose from D-glycero-beta-D-manno-heptose 7-phosphate: step 1/4. The protein operates within nucleotide-sugar biosynthesis; ADP-L-glycero-beta-D-manno-heptose biosynthesis; ADP-L-glycero-beta-D-manno-heptose from D-glycero-beta-D-manno-heptose 7-phosphate: step 3/4. Catalyzes the phosphorylation of D-glycero-D-manno-heptose 7-phosphate at the C-1 position to selectively form D-glycero-beta-D-manno-heptose-1,7-bisphosphate. Its function is as follows. Catalyzes the ADP transfer from ATP to D-glycero-beta-D-manno-heptose 1-phosphate, yielding ADP-D-glycero-beta-D-manno-heptose. The protein is Bifunctional protein HldE of Campylobacter curvus (strain 525.92).